The following is a 294-amino-acid chain: Pyridoxal 5'-phosphate synthase subunit PdxS (294 aa).

Asp24 contributes to the D-ribose 5-phosphate binding site. The active-site Schiff-base intermediate with D-ribose 5-phosphate is the Lys81. Gly153 serves as a coordination point for D-ribose 5-phosphate. Arg165 contacts D-glyceraldehyde 3-phosphate. Residues Gly214 and 235–236 (GS) each bind D-ribose 5-phosphate.

It belongs to the PdxS/SNZ family. In the presence of PdxT, forms a dodecamer of heterodimers.

The enzyme catalyses aldehydo-D-ribose 5-phosphate + D-glyceraldehyde 3-phosphate + L-glutamine = pyridoxal 5'-phosphate + L-glutamate + phosphate + 3 H2O + H(+). Its pathway is cofactor biosynthesis; pyridoxal 5'-phosphate biosynthesis. In terms of biological role, catalyzes the formation of pyridoxal 5'-phosphate from ribose 5-phosphate (RBP), glyceraldehyde 3-phosphate (G3P) and ammonia. The ammonia is provided by the PdxT subunit. Can also use ribulose 5-phosphate and dihydroxyacetone phosphate as substrates, resulting from enzyme-catalyzed isomerization of RBP and G3P, respectively. This chain is Pyridoxal 5'-phosphate synthase subunit PdxS, found in Bacillus licheniformis (strain ATCC 14580 / DSM 13 / JCM 2505 / CCUG 7422 / NBRC 12200 / NCIMB 9375 / NCTC 10341 / NRRL NRS-1264 / Gibson 46).